The sequence spans 582 residues: Putative BTB/POZ domain-containing protein At3g08660 (582 aa).

The disordered stretch occupies residues 1–21 (MGSDSTLSLPSSSPPCNNRSS). A BTB domain is found at 36 to 103 (GDIIVVVDGE…CYGINFDITA (68 aa)). The region spanning 196–466 (EMWTEELSAL…VRVLYTEQLR (271 aa)) is the NPH3 domain. A Phosphotyrosine modification is found at tyrosine 407. The tract at residues 558-582 (GGETRQKVNRKSRSVSERKSSRSGR) is disordered. Basic and acidic residues predominate over residues 571–582 (SVSERKSSRSGR).

Belongs to the NPH3 family.

It functions in the pathway protein modification; protein ubiquitination. Functionally, may act as a substrate-specific adapter of an E3 ubiquitin-protein ligase complex (CUL3-RBX1-BTB) which mediates the ubiquitination and subsequent proteasomal degradation of target proteins. This is Putative BTB/POZ domain-containing protein At3g08660 from Arabidopsis thaliana (Mouse-ear cress).